The following is a 318-amino-acid chain: Endochitinase 1 (318 aa).

Residues 1 to 18 form the signal peptide; the sequence is EFTTLFLLFSVLLLSASA. The region spanning 19 to 60 is the Chitin-binding type-1 domain; that stretch reads EQCGSQAGGALCASGLCCSKFGWCGDTNDYCGPGNCQSQCPG. 7 disulfides stabilise this stretch: Cys-21-Cys-36, Cys-30-Cys-42, Cys-35-Cys-49, Cys-54-Cys-58, Cys-89-Cys-152, Cys-164-Cys-172, and Cys-271-Cys-303. The Proton donor role is filled by Glu-134. A propeptide spans 312–318 (removed in mature form, vacuolar targeting); that stretch reads GLLVDTM.

It belongs to the glycosyl hydrolase 19 family. Chitinase class I subfamily.

The protein localises to the vacuole. The catalysed reaction is Random endo-hydrolysis of N-acetyl-beta-D-glucosaminide (1-&gt;4)-beta-linkages in chitin and chitodextrins.. Functionally, defense against chitin-containing fungal pathogens. In Solanum tuberosum (Potato), this protein is Endochitinase 1 (CHTB1).